The following is an 855-amino-acid chain: Envelope glycoprotein gp150 (855 aa).

The Extracellular segment spans residues 1-784; the sequence is MAEGGFTHNQ…WIGKIPQYLK (784 aa). N135, N220, N258, N269, N274, N298, N330, N336, N342, N372, N418, N422, N448, N469, N481, N499, N518, N531, N548, and N551 each carry an N-linked (GlcNAc...) asparagine; by host glycan. Residues 615-635 form a fusion peptide region; it reads IMLALATVLSMAGAGTGATAI. Residues 642 to 692 adopt a coiled-coil conformation; that stretch reads HQVLATHQQALEKITEALKINNLRLITLEHQVLVIGLRVEAIEKFLYTAFA. The interval 661 to 679 is immunosuppression; it reads INNLRLITLEHQVLVIGLR. Residues N716, N720, N728, and N736 are each glycosylated (N-linked (GlcNAc...) asparagine; by host). A coiled-coil region spans residues 735-771; that stretch reads YNQTRDLQNKFYEIIMDIEQNNVQGKTGIQQLQKWEN. The chain crosses the membrane as a helical span at residues 785-805; sequence GLLGSVLGIGLGILLLLICLP. The Cytoplasmic portion of the chain corresponds to 806 to 855; sequence TLVDCIRNCTNKILGYTVIAMPEIDDEEVHLSVELRRNGRQCGISEKEEE.

In terms of assembly, the mature envelope protein (Env) consists of a trimer of SU-TM heterodimers attached by noncovalent interactions or by a labile interchain disulfide bond. In terms of processing, specific enzymatic cleavages in vivo yield mature proteins. Envelope glycoproteins are synthesized as an inactive precursor that is N-glycosylated and processed likely by host cell furin or by a furin-like protease in the Golgi to yield the mature SU and TM proteins. The cleavage site between SU and TM requires the minimal sequence [KR]-X-[KR]-R.

Its subcellular location is the virion membrane. It is found in the host cell membrane. The surface protein (SU) attaches the virus to the host cell by binding to its receptor. This interaction triggers the refolding of the transmembrane protein (TM) and is thought to activate its fusogenic potential by unmasking its fusion peptide. Fusion occurs at the host cell plasma membrane. Its function is as follows. The transmembrane protein (TM) acts as a class I viral fusion protein. Under the current model, the protein has at least 3 conformational states: pre-fusion native state, pre-hairpin intermediate state, and post-fusion hairpin state. During viral and target cell membrane fusion, the coiled coil regions (heptad repeats) assume a trimer-of-hairpins structure, positioning the fusion peptide in close proximity to the C-terminal region of the ectodomain. The formation of this structure appears to drive apposition and subsequent fusion of viral and target cell membranes. Membranes fusion leads to delivery of the nucleocapsid into the cytoplasm. This is Envelope glycoprotein gp150 (env) from Feline immunodeficiency virus (isolate TM2) (FIV).